We begin with the raw amino-acid sequence, 300 residues long: DNA repair protein RecO (300 aa).

The protein belongs to the RecO family.

Functionally, involved in DNA repair and RecF pathway recombination. This chain is DNA repair protein RecO, found in Nostoc punctiforme (strain ATCC 29133 / PCC 73102).